The following is a 407-amino-acid chain: NADH-quinone oxidoreductase subunit D (407 aa).

This sequence belongs to the complex I 49 kDa subunit family. In terms of assembly, NDH-1 is composed of 14 different subunits. Subunits NuoB, C, D, E, F, and G constitute the peripheral sector of the complex.

It is found in the cell inner membrane. The enzyme catalyses a quinone + NADH + 5 H(+)(in) = a quinol + NAD(+) + 4 H(+)(out). NDH-1 shuttles electrons from NADH, via FMN and iron-sulfur (Fe-S) centers, to quinones in the respiratory chain. The immediate electron acceptor for the enzyme in this species is believed to be ubiquinone. Couples the redox reaction to proton translocation (for every two electrons transferred, four hydrogen ions are translocated across the cytoplasmic membrane), and thus conserves the redox energy in a proton gradient. The polypeptide is NADH-quinone oxidoreductase subunit D (Roseobacter denitrificans (strain ATCC 33942 / OCh 114) (Erythrobacter sp. (strain OCh 114))).